The chain runs to 346 residues: Annexin A1 (346 aa).

Residue alanine 2 is modified to N-acetylalanine. Phosphoserine; by TRPM7 is present on serine 5. Glutamine 19 is covalently cross-linked (Isoglutamyl lysine isopeptide (Gln-Lys) (interchain with K-?)). A Phosphotyrosine; by EGFR modification is found at tyrosine 21. Position 27 is a phosphoserine; by PKC (serine 27). Residues serine 34 and serine 37 each carry the phosphoserine modification. 4 Annexin repeats span residues 42–113 (FNPS…AMLK), 114–185 (TPAQ…ALAK), 197–269 (DLAD…TIVK), and 273–344 (STPA…ALCG). The residue at position 58 (lysine 58) is an N6-acetyllysine. Residues glycine 59, valine 60, glutamate 62, lysine 97, leucine 100, glutamate 105, methionine 127, glycine 129, glycine 131, threonine 132, and glutamate 134 each coordinate Ca(2+). Threonine 136 bears the Phosphothreonine mark. Aspartate 171, glycine 210, and arginine 213 together coordinate Ca(2+). A Glycyl lysine isopeptide (Lys-Gly) (interchain with G-Cter in SUMO1); alternate cross-link involves residue lysine 214. A Glycyl lysine isopeptide (Lys-Gly) (interchain with G-Cter in SUMO2); alternate cross-link involves residue lysine 214. Ca(2+)-binding residues include glycine 215, aspartate 253, glutamate 255, and leucine 256. Lysine 257 participates in a covalent cross-link: Glycyl lysine isopeptide (Lys-Gly) (interchain with G-Cter in SUMO1). Ca(2+)-binding residues include glutamate 261, methionine 286, glycine 288, and glycine 290. At lysine 312 the chain carries N6-acetyllysine. A disulfide bridge links cysteine 324 with cysteine 343. Leucine 328, glutamate 330, and threonine 331 together coordinate Ca(2+). Lysine 332 participates in a covalent cross-link: Glycyl lysine isopeptide (Lys-Gly) (interchain with G-Cter in SUMO1). Glutamate 336 contributes to the Ca(2+) binding site.

Belongs to the annexin family. Homodimer; non-covalently linked. Homodimer; linked by transglutamylation. Homodimers linked by transglutamylation are observed in placenta, but not in other tissues. Interacts with S100A11. Heterotetramer, formed by two molecules each of S100A11 and ANXA1. Interacts with DYSF. Interacts with EGFR. In terms of processing, phosphorylated by protein kinase C, EGFR and TRPM7. Phosphorylated in response to EGF treatment. Sumoylated. Post-translationally, proteolytically cleaved by cathepsin CTSG to release the active N-terminal peptide Ac2-26. In terms of tissue distribution, detected in eosinophils. Detected in lung, placenta, spleen and thymus (at protein level).

Its subcellular location is the nucleus. It localises to the cytoplasm. It is found in the cell projection. The protein localises to the cilium. The protein resides in the basolateral cell membrane. Its subcellular location is the lateral cell membrane. It localises to the cell membrane. It is found in the apical cell membrane. The protein localises to the membrane. The protein resides in the endosome membrane. Its subcellular location is the secreted. It localises to the extracellular space. It is found in the early endosome. The protein localises to the cytoplasmic vesicle membrane. The protein resides in the extracellular exosome. Its subcellular location is the cytoplasmic vesicle. It localises to the secretory vesicle lumen. It is found in the phagocytic cup. In terms of biological role, plays important roles in the innate immune response as effector of glucocorticoid-mediated responses and regulator of the inflammatory process. Has anti-inflammatory activity. Plays a role in glucocorticoid-mediated down-regulation of the early phase of the inflammatory response. Contributes to the adaptive immune response by enhancing signaling cascades that are triggered by T-cell activation, regulates differentiation and proliferation of activated T-cells. Promotes the differentiation of T-cells into Th1 cells and negatively regulates differentiation into Th2 cells. Has no effect on unstimulated T-cells. Negatively regulates hormone exocytosis via activation of the formyl peptide receptors and reorganization of the actin cytoskeleton. Has high affinity for Ca(2+) and can bind up to eight Ca(2+) ions. Displays Ca(2+)-dependent binding to phospholipid membranes. Plays a role in the formation of phagocytic cups and phagosomes. Plays a role in phagocytosis by mediating the Ca(2+)-dependent interaction between phagosomes and the actin cytoskeleton. Its function is as follows. Functions at least in part by activating the formyl peptide receptors and downstream signaling cascades. Promotes chemotaxis of granulocytes and monocytes via activation of the formyl peptide receptors. Promotes rearrangement of the actin cytoskeleton, cell polarization and cell migration. Promotes resolution of inflammation and wound healing. Acts via neutrophil N-formyl peptide receptors to enhance the release of CXCL2. The protein is Annexin A1 (Anxa1) of Rattus norvegicus (Rat).